The primary structure comprises 312 residues: Glyoxylate/hydroxypyruvate reductase A (312 aa).

The active site involves R227. H275 (proton donor) is an active-site residue.

Belongs to the D-isomer specific 2-hydroxyacid dehydrogenase family. GhrA subfamily.

The protein localises to the cytoplasm. It carries out the reaction glycolate + NADP(+) = glyoxylate + NADPH + H(+). It catalyses the reaction (R)-glycerate + NAD(+) = 3-hydroxypyruvate + NADH + H(+). The catalysed reaction is (R)-glycerate + NADP(+) = 3-hydroxypyruvate + NADPH + H(+). Catalyzes the NADPH-dependent reduction of glyoxylate and hydroxypyruvate into glycolate and glycerate, respectively. The polypeptide is Glyoxylate/hydroxypyruvate reductase A (Escherichia coli (strain SMS-3-5 / SECEC)).